The following is a 581-amino-acid chain: Serine/threonine-protein kinase PINK1, mitochondrial (581 aa).

The N-terminal 77 residues, Met1–Leu77, are a transit peptide targeting the mitochondrion. The Mitochondrial intermembrane segment spans residues Ala78–Ala93. The chain crosses the membrane as a helical span at residues Gly94–Leu110. Positions Ile111 to Glu117 are required for outer membrane localization. Topologically, residues Ile111–Leu581 are cytoplasmic. In terms of domain architecture, Protein kinase spans Tyr156–Leu511. ATP-binding positions include Ile162–Val170 and Lys186. Residues Gly189–Ala208 form a disordered region. Ser228 is modified (phosphoserine; by autocatalysis). Residue Asp362 is the Proton acceptor of the active site. A Phosphoserine; by autocatalysis modification is found at Ser402.

Belongs to the protein kinase superfamily. Ser/Thr protein kinase family. In terms of assembly, upon mitochondrial depolarization, it forms a supercomplex with TOM and TIM23 complexes. PINK1-TOM-TIM23 supercomplex formation requires PINK1 interaction with TOMM20 and TOMM70 and is critical for PINK1 stabilization at the outer mitochondrial membrane, kinase activation and downstream mitophagy. Upon mitochondrial depolarization, interacts with TIMM23; the interaction is required for PINK1 accumulation at the outer mitochondrial membrane, kinase activation by autophosphorylation and PRKN recruitement to mitochondria. Interacts with PRKN. Interacts with FBXO7. Forms a complex with PRKN and PARK7. Interacts with NENF. The cofactor is Mg(2+). Post-translationally, proteolytically cleaved. In healthy cells, the precursor is continuously imported into the inner mitochondrial membrane (IMM), where it is proteolytically cleaved by mitochondrial-processing peptidase (MPP) and then undergoes further proteolytic cleavage by PARL or AFG3L2 to give rise to the 52 kDa short form. The 52 kDa short form is then released into the cytosol where it rapidly undergoes proteasome-dependent degradation. In unhealthy cells, when cellular stress conditions lead to the loss of mitochondrial membrane potential, mitochondrial import is impaired leading to the precursor accumulating on the outer mitochondrial membrane (OMM). If accumulation at the OMM fails and it is imported into the depolarized mitochondria, it undergoes cleavage by the IMM protease OMA1, promoting its subsequent degradation by the proteasome. Autophosphorylated. Loss of mitochondrial membrane potential results in the precursor accumulating on the outer mitochondrial membrane (OMM) where it is activated by autophosphorylation. Autophosphorylation at Ser-228 and Ser-402 is sufficient and essential for selective recruitment of PRKN to depolarized mitochondria, via PINK1-dependent phosphorylation of ubiquitin and maybe PRKN. In terms of tissue distribution, highly expressed in heart, skeletal muscle and testis, and at lower levels in brain, placenta, liver, kidney, pancreas, prostate, ovary and small intestine. Present in the embryonic testis from an early stage of development.

It localises to the mitochondrion outer membrane. The protein resides in the mitochondrion inner membrane. The protein localises to the cytoplasm. Its subcellular location is the cytosol. The enzyme catalyses L-seryl-[protein] + ATP = O-phospho-L-seryl-[protein] + ADP + H(+). The catalysed reaction is L-threonyl-[protein] + ATP = O-phospho-L-threonyl-[protein] + ADP + H(+). Its function is as follows. Serine/threonine-protein kinase which acts as a sensor of mitochondrial damage and protects against mitochondrial dysfunction during cellular stress. It phosphorylates mitochondrial proteins to coordinate mitochondrial quality control mechanisms that remove and replace dysfunctional mitochondrial components. Depending on the severity of mitochondrial damage, activity ranges from preventing apoptosis and stimulating mitochondrial biogenesis to eliminating severely damaged mitochondria via PINK1-PRKN-dependent mitophagy. When cellular stress results in irreversible mitochondrial damage, PINK1 accumulates at the outer mitochondrial membrane (OMM) where it phosphorylates pre-existing polyubiquitin chains at 'Ser-65', recruits PRKN from the cytosol to the OMM and activates PRKN by phosphorylation at 'Ser-65'; activated PRKN then ubiquinates VDAC1 and other OMM proteins to initiate mitophagy. The PINK1-PRKN pathway also promotes fission of damaged mitochondria through phosphorylation and PRKN-dependent degradation of mitochondrial proteins involved in fission such as MFN2. This prevents the refusion of unhealthy mitochondria with the mitochondrial network or initiates mitochondrial fragmentation facilitating their later engulfment by autophagosomes. Also promotes mitochondrial fission independently of PRKN and ATG7-mediated mitophagy, via the phosphorylation and activation of DNM1L. Regulates motility of damaged mitochondria by promoting the ubiquitination and subsequent degradation of MIRO1 and MIRO2; in motor neurons, this likely inhibits mitochondrial intracellular anterograde transport along the axons which probably increases the chance of the mitochondria undergoing mitophagy in the soma. Required for ubiquinone reduction by mitochondrial complex I by mediating phosphorylation of complex I subunit NDUFA10. Phosphorylates LETM1, positively regulating its mitochondrial calcium transport activity. This is Serine/threonine-protein kinase PINK1, mitochondrial (PINK1) from Homo sapiens (Human).